The chain runs to 473 residues: Putative sulfoquinovose importer (473 aa).

Helical transmembrane passes span 18 to 38 (AYGV…LYLL), 45 to 65 (LGMP…FTAF), 88 to 108 (PFIL…FFAT), 110 to 130 (FTLP…GLFY), 160 to 180 (GGAT…QALF), 187 to 207 (GYLI…WWCF), 239 to 259 (LLVL…KLAI), 276 to 296 (WMGF…PAAV), 317 to 337 (ILNF…CIAF), 380 to 400 (ISAA…GYIP), and 415 to 435 (LIFL…GFFY).

Belongs to the sodium:galactoside symporter (TC 2.A.2) family.

The protein resides in the cell inner membrane. In terms of biological role, could be involved in sulfoquinovose import. The polypeptide is Putative sulfoquinovose importer (yihO) (Salmonella typhimurium (strain LT2 / SGSC1412 / ATCC 700720)).